We begin with the raw amino-acid sequence, 319 residues long: Mitochondrial thiamine pyrophosphate carrier 1 (319 aa).

Solcar repeat units lie at residues 12-110 (GQRY…VTQS), 121-207 (PQPA…VRVP), and 214-309 (PFGS…VLKI). Transmembrane regions (helical) follow at residues 17 to 35 (VVAAGAIAGMVSRFCVAPL), 91 to 107 (LLYIFYGAIQFTTYRTV), 127 to 147 (FVSGATAGGIGTFTTYPFDLL), 182 to 201 (GVSAAVAQIVPYMGLFFATY), 221 to 237 (TAGVIASVIAKTGVFPL), and 284 to 301 (GLTVSLIKAAPASAVTMW).

The protein belongs to the mitochondrial carrier (TC 2.A.29) family.

The protein localises to the mitochondrion inner membrane. In terms of biological role, mitochondrial transporter that mediates uptake of thiamine pyrophosphate (ThPP) into mitochondria. The sequence is that of Mitochondrial thiamine pyrophosphate carrier 1 (TPC1) from Coccidioides immitis (strain RS) (Valley fever fungus).